The chain runs to 121 residues: Small ribosomal subunit protein eS24 (121 aa).

This sequence belongs to the eukaryotic ribosomal protein eS24 family.

In Pyrobaculum aerophilum (strain ATCC 51768 / DSM 7523 / JCM 9630 / CIP 104966 / NBRC 100827 / IM2), this protein is Small ribosomal subunit protein eS24.